The sequence spans 359 residues: Glyceraldehyde-3-phosphate dehydrogenase, glycosomal (359 aa).

NAD(+) is bound by residues 12–13 (RI), Asp-38, Gln-91, and Ser-134. Residues 165–167 (SCT), Thr-197, 226–227 (TG), and Arg-249 contribute to the D-glyceraldehyde 3-phosphate site. Cys-166 (nucleophile) is an active-site residue. Asn-335 provides a ligand contact to NAD(+). The short motif at 357–359 (ARL) is the Microbody targeting signal element.

Belongs to the glyceraldehyde-3-phosphate dehydrogenase family. As to quaternary structure, homotetramer.

Its subcellular location is the glycosome. It carries out the reaction D-glyceraldehyde 3-phosphate + phosphate + NAD(+) = (2R)-3-phospho-glyceroyl phosphate + NADH + H(+). The protein operates within carbohydrate degradation; glycolysis; pyruvate from D-glyceraldehyde 3-phosphate: step 1/5. The sequence is that of Glyceraldehyde-3-phosphate dehydrogenase, glycosomal from Trypanosoma cruzi.